The primary structure comprises 190 residues: Large ribosomal subunit protein bL25 (190 aa).

Belongs to the bacterial ribosomal protein bL25 family. CTC subfamily. As to quaternary structure, part of the 50S ribosomal subunit; part of the 5S rRNA/L5/L18/L25 subcomplex. Contacts the 5S rRNA. Binds to the 5S rRNA independently of L5 and L18.

This is one of the proteins that binds to the 5S RNA in the ribosome where it forms part of the central protuberance. This Neisseria meningitidis serogroup C (strain 053442) protein is Large ribosomal subunit protein bL25.